A 275-amino-acid polypeptide reads, in one-letter code: NH(3)-dependent NAD(+) synthetase (275 aa).

Residue 46–53 (GISGGQDS) coordinates ATP. D52 serves as a coordination point for Mg(2+). Position 140 (R140) interacts with deamido-NAD(+). An ATP-binding site is contributed by T160. E165 is a Mg(2+) binding site. Deamido-NAD(+) is bound by residues K173 and D180. ATP-binding residues include K189 and T211. 260-261 (HK) provides a ligand contact to deamido-NAD(+).

The protein belongs to the NAD synthetase family. Homodimer.

The catalysed reaction is deamido-NAD(+) + NH4(+) + ATP = AMP + diphosphate + NAD(+) + H(+). It participates in cofactor biosynthesis; NAD(+) biosynthesis; NAD(+) from deamido-NAD(+) (ammonia route): step 1/1. In terms of biological role, catalyzes the ATP-dependent amidation of deamido-NAD to form NAD. Uses ammonia as a nitrogen source. The chain is NH(3)-dependent NAD(+) synthetase from Shigella boydii serotype 4 (strain Sb227).